The sequence spans 259 residues: Ribonuclease HII (259 aa).

The RNase H type-2 domain occupies 72–259; sequence ERIAGIDEAG…PVREALGVQS (188 aa). 3 residues coordinate a divalent metal cation: Asp78, Glu79, and Asp170.

The protein belongs to the RNase HII family. It depends on Mn(2+) as a cofactor. Mg(2+) serves as cofactor.

It is found in the cytoplasm. The catalysed reaction is Endonucleolytic cleavage to 5'-phosphomonoester.. Endonuclease that specifically degrades the RNA of RNA-DNA hybrids. In Geobacillus thermodenitrificans (strain NG80-2), this protein is Ribonuclease HII.